Here is a 369-residue protein sequence, read N- to C-terminus: Caffeine synthase 1 (369 aa).

Residue Tyr24 participates in S-adenosyl-L-homocysteine binding. Thr31 contributes to the caffeine binding site. Cys66, Asn71, Asp103, Leu104, Ser138, and Phe139 together coordinate S-adenosyl-L-homocysteine. The caffeine site is built by Tyr156, His159, and Trp160. Position 177 (Asn177) interacts with Mg(2+). Residue Arg225 participates in caffeine binding. Asp263, Phe265, and Asn266 together coordinate Mg(2+). Phe321 provides a ligand contact to caffeine.

This sequence belongs to the methyltransferase superfamily. Type-7 methyltransferase family. It depends on Mg(2+) as a cofactor.

It carries out the reaction theobromine + S-adenosyl-L-methionine = caffeine + S-adenosyl-L-homocysteine + H(+). The catalysed reaction is 7-methylxanthine + S-adenosyl-L-methionine = theobromine + S-adenosyl-L-homocysteine + H(+). Its pathway is alkaloid biosynthesis. Functionally, involved in the biosynthesis of caffeine. Catalyzes the conversion of 7-methylxanthine (7mX) to theobromine and of theobromine to caffeine. In Camellia crassicolumna (Evergreen tea), this protein is Caffeine synthase 1.